Here is a 352-residue protein sequence, read N- to C-terminus: Vacuolar protein sorting-associated protein 37C (352 aa).

S29 carries the phosphoserine modification. The 90-residue stretch at 78 to 167 (VERCQEQKAK…RRPRALPELA (90 aa)) folds into the VPS37 C-terminal domain. Residues 162 to 352 (ALPELAGDVP…HPPGPAWPRY (191 aa)) are disordered. Pro residues-rich tracts occupy residues 173-185 (KRPP…PQAT), 202-213 (YPLPYSPSPGLP), and 319-336 (PGQP…PPGT).

This sequence belongs to the VPS37 family. As to quaternary structure, component of the ESCRT-I complex (endosomal sorting complex required for transport I) which consists of TSG101, VPS28, a VPS37 protein (VPS37A to -D) and MVB12A or MVB12B in a 1:1:1:1 stoichiometry. Interacts with TSG101, VPS28, MVB12A and MVB12B. Component of the ESCRT-I complex (endosomal sorting complex required for transport I) which consists of TSG101, VPS28, a VPS37 protein (VPS37A to -D) and UBAP1 in a 1:1:1:1 stoichiometry. Interacts with HGS and STAM2. Interacts with CEP55. Phosphorylated by TBK1.

The protein localises to the late endosome membrane. Component of the ESCRT-I complex, a regulator of vesicular trafficking process. Required for the sorting of endocytic ubiquitinated cargos into multivesicular bodies. May be involved in cell growth and differentiation. The protein is Vacuolar protein sorting-associated protein 37C (Vps37c) of Mus musculus (Mouse).